Consider the following 220-residue polypeptide: Grancalcin (220 aa).

EF-hand domains follow at residues 51–86 (SPAD…SGIS), 92–127 (FSLE…LNAW), 122–157 (AALN…MGYR), and 158–193 (LSPQ…ALTD). Ca(2+)-binding residues include Asp105, Asp107, Thr109, Lys111, Glu116, Asp135, Asp137, Ser139, Thr141, and Glu146.

As to quaternary structure, homodimer. Interacts with SRI and LCP1.

The protein localises to the cytoplasm. It localises to the cytoplasmic granule membrane. Calcium-binding protein that may play a role in the adhesion of neutrophils to fibronectin. May play a role in the formation of focal adhesions. This is Grancalcin (Gca) from Mus musculus (Mouse).